The sequence spans 440 residues: GTPase Der (440 aa).

EngA-type G domains follow at residues 3-168 and 177-353; these read PIIA…GKMD and LKLA…EEYT. GTP contacts are provided by residues 9–16, 56–60, 119–122, 183–190, 230–234, and 295–298; these read GRPNVGKS, DTGGL, NKID, GKPNAGKS, DTAGI, and NKWD. The KH-like domain maps to 354 to 438; sequence KRISTGLLNT…PIMISFENKS (85 aa).

Belongs to the TRAFAC class TrmE-Era-EngA-EngB-Septin-like GTPase superfamily. EngA (Der) GTPase family. In terms of assembly, associates with the 50S ribosomal subunit.

In terms of biological role, GTPase that plays an essential role in the late steps of ribosome biogenesis. This Fusobacterium nucleatum subsp. nucleatum (strain ATCC 25586 / DSM 15643 / BCRC 10681 / CIP 101130 / JCM 8532 / KCTC 2640 / LMG 13131 / VPI 4355) protein is GTPase Der.